A 102-amino-acid polypeptide reads, in one-letter code: Small ribosomal subunit protein uS10 (102 aa).

Belongs to the universal ribosomal protein uS10 family. In terms of assembly, part of the 30S ribosomal subunit.

Functionally, involved in the binding of tRNA to the ribosomes. The protein is Small ribosomal subunit protein uS10 of Methanoregula boonei (strain DSM 21154 / JCM 14090 / 6A8).